A 168-amino-acid polypeptide reads, in one-letter code: Large ribosomal subunit protein uL5 (168 aa).

Belongs to the universal ribosomal protein uL5 family. Part of the 50S ribosomal subunit; contacts the 5S rRNA and probably tRNA. Forms a bridge to the 30S subunit in the 70S ribosome.

In terms of biological role, this is one of the proteins that bind and probably mediate the attachment of the 5S RNA into the large ribosomal subunit, where it forms part of the central protuberance. In the 70S ribosome it contacts protein S13 of the 30S subunit (bridge B1b), connecting the 2 subunits; this bridge is implicated in subunit movement. May contact the P site tRNA; the 5S rRNA and some of its associated proteins might help stabilize positioning of ribosome-bound tRNAs. The chain is Large ribosomal subunit protein uL5 from Methanospirillum hungatei JF-1 (strain ATCC 27890 / DSM 864 / NBRC 100397 / JF-1).